The chain runs to 335 residues: 3-hydroxyisobutyrate dehydrogenase, mitochondrial (335 aa).

The N-terminal 35 residues, 1-35 (MAASLGFRGAASGLRYWSGRRRPVGSLAAVCSRSM), are a transit peptide targeting the mitochondrion. An NAD(+)-binding site is contributed by 39–68 (TPVGFIGLGNMGNPMAKNLIKHGYPLILYD). Lysine 59 and lysine 75 each carry N6-acetyllysine; alternate. Residues lysine 59 and lysine 75 each carry the N6-succinyllysine; alternate modification. Residue lysine 94 is modified to N6-succinyllysine. NAD(+)-binding positions include 102–103 (LP) and asparagine 107. Position 120 is an N6-acetyllysine (lysine 120). Threonine 133 is a binding site for NAD(+). An N6-succinyllysine modification is found at lysine 140. Lysine 144 carries the N6-acetyllysine modification. Lysine 148 is modified (N6-acetyllysine; alternate). An N6-succinyllysine; alternate modification is found at lysine 148. Lysine 208 is a catalytic residue. Residues lysine 237 and lysine 241 each carry the N6-acetyllysine; alternate modification. An N6-succinyllysine; alternate mark is found at lysine 237 and lysine 241. Lysine 283 serves as a coordination point for NAD(+). Lysine 296 carries the post-translational modification N6-succinyllysine. The residue at position 320 (lysine 320) is an N6-acetyllysine; alternate. At lysine 320 the chain carries N6-succinyllysine; alternate.

Belongs to the HIBADH-related family. 3-hydroxyisobutyrate dehydrogenase subfamily. Homodimer. In terms of tissue distribution, higher level in kidney, liver, and heart than in muscle.

It localises to the mitochondrion. It carries out the reaction 3-hydroxy-2-methylpropanoate + NAD(+) = 2-methyl-3-oxopropanoate + NADH + H(+). It participates in amino-acid degradation; L-valine degradation. This is 3-hydroxyisobutyrate dehydrogenase, mitochondrial (Hibadh) from Rattus norvegicus (Rat).